A 186-amino-acid chain; its full sequence is Sec-independent protein translocase protein TatB (186 aa).

The helical transmembrane segment at Met1–Gly21 threads the bilayer. The segment at Leu162–Ser186 is disordered. Residues Ser177–Ser186 show a composition bias toward polar residues.

The protein belongs to the TatB family. In terms of assembly, the Tat system comprises two distinct complexes: a TatABC complex, containing multiple copies of TatA, TatB and TatC subunits, and a separate TatA complex, containing only TatA subunits. Substrates initially bind to the TatABC complex, which probably triggers association of the separate TatA complex to form the active translocon.

Its subcellular location is the cell inner membrane. In terms of biological role, part of the twin-arginine translocation (Tat) system that transports large folded proteins containing a characteristic twin-arginine motif in their signal peptide across membranes. Together with TatC, TatB is part of a receptor directly interacting with Tat signal peptides. TatB may form an oligomeric binding site that transiently accommodates folded Tat precursor proteins before their translocation. In Haemophilus influenzae (strain 86-028NP), this protein is Sec-independent protein translocase protein TatB.